Reading from the N-terminus, the 355-residue chain is UDP-N-acetylglucosamine--N-acetylmuramyl-(pentapeptide) pyrophosphoryl-undecaprenol N-acetylglucosamine transferase (355 aa).

Residues 14 to 16 (TGG), Asn126, Arg162, Ser190, Ile243, 262 to 267 (ALTVSE), and Gln287 each bind UDP-N-acetyl-alpha-D-glucosamine.

The protein belongs to the glycosyltransferase 28 family. MurG subfamily.

It is found in the cell inner membrane. The enzyme catalyses di-trans,octa-cis-undecaprenyl diphospho-N-acetyl-alpha-D-muramoyl-L-alanyl-D-glutamyl-meso-2,6-diaminopimeloyl-D-alanyl-D-alanine + UDP-N-acetyl-alpha-D-glucosamine = di-trans,octa-cis-undecaprenyl diphospho-[N-acetyl-alpha-D-glucosaminyl-(1-&gt;4)]-N-acetyl-alpha-D-muramoyl-L-alanyl-D-glutamyl-meso-2,6-diaminopimeloyl-D-alanyl-D-alanine + UDP + H(+). Its pathway is cell wall biogenesis; peptidoglycan biosynthesis. Its function is as follows. Cell wall formation. Catalyzes the transfer of a GlcNAc subunit on undecaprenyl-pyrophosphoryl-MurNAc-pentapeptide (lipid intermediate I) to form undecaprenyl-pyrophosphoryl-MurNAc-(pentapeptide)GlcNAc (lipid intermediate II). In Vibrio parahaemolyticus serotype O3:K6 (strain RIMD 2210633), this protein is UDP-N-acetylglucosamine--N-acetylmuramyl-(pentapeptide) pyrophosphoryl-undecaprenol N-acetylglucosamine transferase.